A 488-amino-acid polypeptide reads, in one-letter code: Glutamyl-tRNA(Gln) amidotransferase subunit A (488 aa).

Catalysis depends on charge relay system residues lysine 77 and serine 152. Serine 176 serves as the catalytic Acyl-ester intermediate.

It belongs to the amidase family. GatA subfamily. As to quaternary structure, heterotrimer of A, B and C subunits.

The enzyme catalyses L-glutamyl-tRNA(Gln) + L-glutamine + ATP + H2O = L-glutaminyl-tRNA(Gln) + L-glutamate + ADP + phosphate + H(+). Allows the formation of correctly charged Gln-tRNA(Gln) through the transamidation of misacylated Glu-tRNA(Gln) in organisms which lack glutaminyl-tRNA synthetase. The reaction takes place in the presence of glutamine and ATP through an activated gamma-phospho-Glu-tRNA(Gln). This chain is Glutamyl-tRNA(Gln) amidotransferase subunit A, found in Streptococcus suis (strain 05ZYH33).